The sequence spans 32 residues: Calcitonin (32 aa).

C1 and C7 are joined by a disulfide. P32 is subject to Proline amide.

The protein belongs to the calcitonin family.

It is found in the secreted. Its function is as follows. Causes a rapid but short-lived drop in the level of calcium and phosphate in blood by promoting the incorporation of those ions in the bones. The chain is Calcitonin from Aquarana catesbeiana (American bullfrog).